The chain runs to 140 residues: uncharacterized protein (140 aa).

This is an uncharacterized protein from Mycoplasma genitalium (strain ATCC 33530 / DSM 19775 / NCTC 10195 / G37) (Mycoplasmoides genitalium).